The primary structure comprises 310 residues: Ribosomal RNA small subunit methyltransferase H (310 aa).

S-adenosyl-L-methionine is bound by residues 32-34 (GGH), Asp52, Phe79, Asp100, and Gln107.

It belongs to the methyltransferase superfamily. RsmH family.

It localises to the cytoplasm. It carries out the reaction cytidine(1402) in 16S rRNA + S-adenosyl-L-methionine = N(4)-methylcytidine(1402) in 16S rRNA + S-adenosyl-L-homocysteine + H(+). Functionally, specifically methylates the N4 position of cytidine in position 1402 (C1402) of 16S rRNA. This chain is Ribosomal RNA small subunit methyltransferase H, found in Bacillus cytotoxicus (strain DSM 22905 / CIP 110041 / 391-98 / NVH 391-98).